Here is a 100-residue protein sequence, read N- to C-terminus: NADH-quinone oxidoreductase subunit K (100 aa).

The next 3 membrane-spanning stretches (helical) occupy residues 2–22 (IGLT…LVGI), 29–49 (IMLF…LAAI), and 60–80 (IIAF…LGLL).

The protein belongs to the complex I subunit 4L family. As to quaternary structure, NDH-1 is composed of 14 different subunits. Subunits NuoA, H, J, K, L, M, N constitute the membrane sector of the complex.

Its subcellular location is the cell inner membrane. The enzyme catalyses a quinone + NADH + 5 H(+)(in) = a quinol + NAD(+) + 4 H(+)(out). Functionally, NDH-1 shuttles electrons from NADH, via FMN and iron-sulfur (Fe-S) centers, to quinones in the respiratory chain. The immediate electron acceptor for the enzyme in this species is believed to be ubiquinone. Couples the redox reaction to proton translocation (for every two electrons transferred, four hydrogen ions are translocated across the cytoplasmic membrane), and thus conserves the redox energy in a proton gradient. The chain is NADH-quinone oxidoreductase subunit K from Campylobacter concisus (strain 13826).